The following is a 791-amino-acid chain: Nuclear cap-binding protein subunit 1-A (791 aa).

The disordered stretch occupies residues 1–24; that stretch reads MSRRRHSDENDGGQAHKRRKTSEP. One can recognise an MIF4G domain in the interval 28-240; it reads EDRLESLICR…CLWAQIQKLK (213 aa). A coiled-coil region spans residues 641 to 714; that stretch reads LHSTIRKMNK…SEQKNLFLVI (74 aa). Positions 664 to 687 are disordered; it reads QRLAKQHKHRDSDDNDEDSGRKDG.

It belongs to the NCBP1 family. As to quaternary structure, component of the nuclear cap-binding complex (CBC), a heterodimer composed of ncbp1/cbp80 and ncbp2/cbp20 that interacts with m7GpppG-capped RNA. Component of an alternative nuclear cap-binding complex (CBC) composed of ncbp1/cbp80 and ncbp3.

It localises to the nucleus. It is found in the cytoplasm. Its function is as follows. Component of the cap-binding complex (CBC), which binds cotranscriptionally to the 5'-cap of pre-mRNAs and is involved in various processes such as pre-mRNA splicing, translation regulation, nonsense-mediated mRNA decay, RNA-mediated gene silencing (RNAi) by microRNAs (miRNAs) and mRNA export. The CBC complex is involved in mRNA export from the nucleus, leading to the recruitment of the mRNA export machinery to the 5'-end of mRNA and to mRNA export in a 5' to 3' direction through the nuclear pore. The CBC complex is also involved in mediating U snRNA and intronless mRNAs export from the nucleus. The CBC complex is essential for a pioneer round of mRNA translation, before steady state translation when the CBC complex is replaced by cytoplasmic cap-binding protein eIF4E. The pioneer round of mRNA translation mediated by the CBC complex plays a central role in nonsense-mediated mRNA decay (NMD), NMD only taking place in mRNAs bound to the CBC complex, but not on eIF4E-bound mRNAs. The CBC complex enhances NMD in mRNAs containing at least one exon-junction complex (EJC), promoting the interaction between UPF1 and UPF2. The CBC complex is also involved in 'failsafe' NMD, which is independent of the EJC complex, while it does not participate in Staufen-mediated mRNA decay (SMD). During cell proliferation, the CBC complex is also involved in microRNAs (miRNAs) biogenesis via its interaction with SRRT/ARS2 and is required for miRNA-mediated RNA interference. The CBC complex also acts as a negative regulator of parn, thereby acting as an inhibitor of mRNA deadenylation. In the CBC complex, NCBP1/CBP80 does not bind directly capped RNAs (m7GpppG-capped RNA) but is required to stabilize the movement of the N-terminal loop of NCBP2/CBP20 and lock the CBC into a high affinity cap-binding state with the cap structure. Associates with NCBP3 to form an alternative cap-binding complex (CBC) which plays a key role in mRNA export. The conventional CBC with NCBP2 binds both small nuclear RNA (snRNA) and messenger (mRNA) and is involved in their export from the nucleus whereas the alternative CBC with NCBP3 does not bind snRNA and associates only with mRNA thereby playing a role only in mRNA export. This is Nuclear cap-binding protein subunit 1-A (ncbp1-a) from Xenopus laevis (African clawed frog).